The sequence spans 216 residues: Probable transaldolase (216 aa).

The Schiff-base intermediate with substrate role is filled by Lys-83.

Belongs to the transaldolase family. Type 3B subfamily.

The protein resides in the cytoplasm. The catalysed reaction is D-sedoheptulose 7-phosphate + D-glyceraldehyde 3-phosphate = D-erythrose 4-phosphate + beta-D-fructose 6-phosphate. It functions in the pathway carbohydrate degradation; pentose phosphate pathway; D-glyceraldehyde 3-phosphate and beta-D-fructose 6-phosphate from D-ribose 5-phosphate and D-xylulose 5-phosphate (non-oxidative stage): step 2/3. Transaldolase is important for the balance of metabolites in the pentose-phosphate pathway. The sequence is that of Probable transaldolase from Symbiobacterium thermophilum (strain DSM 24528 / JCM 14929 / IAM 14863 / T).